The chain runs to 212 residues: Ribonuclease HII (212 aa).

The region spanning Met-1–Gln-206 is the RNase H type-2 domain. A divalent metal cation is bound by residues Asp-7, Glu-8, and Asp-100.

This sequence belongs to the RNase HII family. Mn(2+) is required as a cofactor. The cofactor is Mg(2+).

It localises to the cytoplasm. It carries out the reaction Endonucleolytic cleavage to 5'-phosphomonoester.. Endonuclease that specifically degrades the RNA of RNA-DNA hybrids. The chain is Ribonuclease HII from Halobacterium salinarum (strain ATCC 29341 / DSM 671 / R1).